The primary structure comprises 113 residues: Urease subunit beta (113 aa).

Belongs to the urease beta subunit family. Heterotrimer of UreA (gamma), UreB (beta) and UreC (alpha) subunits. Three heterotrimers associate to form the active enzyme.

It is found in the cytoplasm. The catalysed reaction is urea + 2 H2O + H(+) = hydrogencarbonate + 2 NH4(+). It functions in the pathway nitrogen metabolism; urea degradation; CO(2) and NH(3) from urea (urease route): step 1/1. This is Urease subunit beta from Nitrosospira multiformis (strain ATCC 25196 / NCIMB 11849 / C 71).